A 55-amino-acid chain; its full sequence is Large ribosomal subunit protein bL33 (55 aa).

It belongs to the bacterial ribosomal protein bL33 family.

The sequence is that of Large ribosomal subunit protein bL33 from Yersinia enterocolitica serotype O:8 / biotype 1B (strain NCTC 13174 / 8081).